The sequence spans 539 residues: Chaperonin GroEL (539 aa).

Residues 29–32 (TIGP), 86–90 (DGTTT), G413, 476–478 (NAA), and D492 each bind ATP.

Belongs to the chaperonin (HSP60) family. As to quaternary structure, forms a cylinder of 14 subunits composed of two heptameric rings stacked back-to-back. Interacts with the co-chaperonin GroES.

It localises to the cytoplasm. It carries out the reaction ATP + H2O + a folded polypeptide = ADP + phosphate + an unfolded polypeptide.. Functionally, together with its co-chaperonin GroES, plays an essential role in assisting protein folding. The GroEL-GroES system forms a nano-cage that allows encapsulation of the non-native substrate proteins and provides a physical environment optimized to promote and accelerate protein folding. This chain is Chaperonin GroEL, found in Pediococcus pentosaceus (strain ATCC 25745 / CCUG 21536 / LMG 10740 / 183-1w).